The sequence spans 64 residues: Large ribosomal subunit protein bL35 (64 aa).

The disordered stretch occupies residues 1–31; sequence MPKMKTHSGAKKRFKLTGTGKLKRQQANRRH.

The protein belongs to the bacterial ribosomal protein bL35 family.

The protein is Large ribosomal subunit protein bL35 of Paenarthrobacter aurescens (strain TC1).